The following is a 318-amino-acid chain: Na(+)-translocating ferredoxin:NAD(+) oxidoreductase complex subunit D (318 aa).

Helical transmembrane passes span 35-55 (LAVAGYVFGLWALALVAICVI), 77-99 (WSAVVTGVLLAFNLPINAPWWIG), and 114-134 (FGGLGQNFINPALAARAFLLA). At T156 the chain carries FMN phosphoryl threonine. The next 3 helical transmembrane spans lie at 182–202 (VYGCIGEISALALLIGGLYLI), 206–226 (IISWRIPTIYLLTIAIFALLV), and 261–281 (IIYAIGCGLITMIIRLYGGYP).

The protein belongs to the NqrB/RnfD family. The complex is composed of six subunits: RnfA, RnfB, RnfC, RnfD, RnfE and RnfG. FMN is required as a cofactor.

It is found in the cell membrane. It carries out the reaction 2 reduced [2Fe-2S]-[ferredoxin] + Na(+)(in) + NAD(+) + H(+) = 2 oxidized [2Fe-2S]-[ferredoxin] + Na(+)(out) + NADH. Its function is as follows. Part of a membrane-bound complex that couples electron transfer with translocation of ions across the membrane. Couples electron transfer from reduced ferredoxin to NAD(+) with electrogenic movement of Na(+) out of the cell. Involved in caffeate respiration. This is Na(+)-translocating ferredoxin:NAD(+) oxidoreductase complex subunit D from Acetobacterium woodii (strain ATCC 29683 / DSM 1030 / JCM 2381 / KCTC 1655 / WB1).